A 517-amino-acid polypeptide reads, in one-letter code: ATP synthase subunit beta (517 aa).

2 stretches are compositionally biased toward low complexity: residues 1–22 (MAKA…AAKA) and 29–42 (AKTA…APKA). Residues 1–42 (MAKAATPKTTAAAEAKPAAAKAPAKKAPAKTAAAKSDAAPKA) form a disordered region. 195 to 202 (GGAGVGKT) provides a ligand contact to ATP.

Belongs to the ATPase alpha/beta chains family. As to quaternary structure, F-type ATPases have 2 components, CF(1) - the catalytic core - and CF(0) - the membrane proton channel. CF(1) has five subunits: alpha(3), beta(3), gamma(1), delta(1), epsilon(1). CF(0) has three main subunits: a(1), b(2) and c(9-12). The alpha and beta chains form an alternating ring which encloses part of the gamma chain. CF(1) is attached to CF(0) by a central stalk formed by the gamma and epsilon chains, while a peripheral stalk is formed by the delta and b chains.

The protein localises to the cell inner membrane. It catalyses the reaction ATP + H2O + 4 H(+)(in) = ADP + phosphate + 5 H(+)(out). Produces ATP from ADP in the presence of a proton gradient across the membrane. The catalytic sites are hosted primarily by the beta subunits. The chain is ATP synthase subunit beta from Brucella anthropi (strain ATCC 49188 / DSM 6882 / CCUG 24695 / JCM 21032 / LMG 3331 / NBRC 15819 / NCTC 12168 / Alc 37) (Ochrobactrum anthropi).